A 38-amino-acid chain; its full sequence is Large ribosomal subunit protein bL36 (38 aa).

The protein belongs to the bacterial ribosomal protein bL36 family.

The polypeptide is Large ribosomal subunit protein bL36 (Phytoplasma mali (strain AT)).